The sequence spans 254 residues: Zinc transporter GufA (254 aa).

Helical transmembrane passes span 4-24 (GLVA…PVLV), 74-94 (VAAG…LMPH), 112-132 (ALLF…AVGV), 143-163 (LSVA…VALA), 176-196 (FLAL…VLAL), 198-218 (LSSA…LYVI), and 234-254 (EATT…MSLG). 6 residues coordinate Zn(2+): Asn-123, Glu-126, Gln-152, Asn-153, Glu-156, and Glu-185.

The protein belongs to the ZIP transporter (TC 2.A.5) family. As to quaternary structure, homodimer.

The protein localises to the cell inner membrane. Its function is as follows. Mediates the uptake of Zn(2+). This chain is Zinc transporter GufA (gufA), found in Myxococcus xanthus.